Reading from the N-terminus, the 1105-residue chain is Serine/threonine-protein kinase 4 homolog B (1105 aa).

The 252-residue stretch at 23 to 274 (FDLIECLGRG…AKDLLKHSFF (252 aa)) folds into the Protein kinase domain. Residues 29–37 (LGRGSFGSV) and Lys-52 each bind ATP. Catalysis depends on Asp-142, which acts as the Proton acceptor. Disordered stretches follow at residues 348 to 396 (STQI…TKNN), 411 to 482 (SSSA…RQPA), and 495 to 541 (PSFG…SLPL). Low complexity-rich tracts occupy residues 358-396 (QAQQQQQQAQQQQQQQQQQQQQYQPPSPNNNNRTTTKNN) and 411-437 (SSSASASTSPSPSSISSNGNKSGTTTN). The span at 438–458 (DYHTGNGRTSSSSPQFGLQHQ) shows a compositional bias: polar residues. 2 stretches are compositionally biased toward low complexity: residues 459–473 (NSSNSFPSSPNTVPS) and 513–541 (PIGSPITKRPTPTMQSSTTTTTSSSSLPL). The tract at residues 516–1105 (SPITKRPTPT…SEFDLDFYNN (590 aa)) is calpain-like cysteine protease-like. Domain III regions lie at residues 641–668 (EVSAKITMEPGYYVIIPATFEPNQEGSF), 791–830 (VHTQQQMPPGCYIIVPCTYDSRQEGSFTLTCYSDCQQGSI), 836–972 (SEQI…NVIQ), and 1076–1103 (VVIPSTFEPNIQDSFNLTIYSEFDLDFY).

This sequence in the N-terminal section; belongs to the protein kinase superfamily. STE Ser/Thr protein kinase family. STE20 subfamily. In the C-terminal section; belongs to the peptidase C2 family. The cofactor is Mn(2+).

The catalysed reaction is L-seryl-[protein] + ATP = O-phospho-L-seryl-[protein] + ADP + H(+). It carries out the reaction L-threonyl-[protein] + ATP = O-phospho-L-threonyl-[protein] + ADP + H(+). Probable serine/threonine-protein kinase. In Dictyostelium discoideum (Social amoeba), this protein is Serine/threonine-protein kinase 4 homolog B (krsB).